The following is a 395-amino-acid chain: Na(+)/H(+) antiporter NhaA (395 aa).

A run of 12 helical transmembrane segments spans residues 18–38 (AGGI…NSPL), 64–84 (LLMW…GLEV), 100–120 (IFPA…YWLV), 129–149 (GGWA…LVLL), 160–180 (FLLA…ALFF), 182–202 (HDLS…LILL), 205–225 (FKVS…VSVL), 226–246 (KSGV…PLKG), 266–286 (FLIL…GLGM), 295–315 (LGVT…FSYL), 333–353 (IFAV…LASL), and 368–388 (LGIL…LFVT).

The protein belongs to the NhaA Na(+)/H(+) (TC 2.A.33) antiporter family.

It localises to the cell inner membrane. The catalysed reaction is Na(+)(in) + 2 H(+)(out) = Na(+)(out) + 2 H(+)(in). In terms of biological role, na(+)/H(+) antiporter that extrudes sodium in exchange for external protons. In Histophilus somni (strain 129Pt) (Haemophilus somnus), this protein is Na(+)/H(+) antiporter NhaA.